A 200-amino-acid chain; its full sequence is Cysteine dioxygenase type 1 (200 aa).

Residues His86, His88, and His140 each coordinate Fe cation. Residues 93 to 157 (CFLKMLQGNL…TEPAVSLHLY (65 aa)) constitute a cross-link (3'-(S-cysteinyl)-tyrosine (Cys-Tyr)).

This sequence belongs to the cysteine dioxygenase family. Monomer. Fe cation is required as a cofactor. Requires Ni(2+) as cofactor. The cofactor is Zn(2+). Post-translationally, the thioether cross-link between Cys-93 and Tyr-157 plays a structural role through stabilizing the Fe(2+) ion, and prevents the production of highly damaging free hydroxyl radicals by holding the oxygen radical via hydroxyl hydrogen.

The enzyme catalyses L-cysteine + O2 = 3-sulfino-L-alanine + H(+). Its pathway is organosulfur biosynthesis; taurine biosynthesis; hypotaurine from L-cysteine: step 1/2. Its function is as follows. Catalyzes the oxidation of cysteine to cysteine sulfinic acid with addition of molecular dioxygen. This chain is Cysteine dioxygenase type 1 (CDO1), found in Bos taurus (Bovine).